We begin with the raw amino-acid sequence, 519 residues long: Serine/threonine-protein kinase RIO3 (519 aa).

5 positions are modified to phosphoserine: Ser8, Ser112, Ser125, Ser127, and Ser128. Positions 122–159 (FEDSDSSEDEVDWQDTRDDPYRPAKPIPTPKKGFIGKG) are disordered. Acidic residues predominate over residues 124-134 (DSDSSEDEVDW). The Protein kinase domain maps to 251-519 (ETITGCISTG…DGSPPVLSAD (269 aa)). ATP is bound by residues 257 to 265 (ISTGKESVV) and Lys290. Asp406 serves as the catalytic Proton acceptor. A Phosphoserine modification is found at Ser512.

Belongs to the protein kinase superfamily. RIO-type Ser/Thr kinase family. Interacts with CASP10. Interacts with IRF3; RIOK3 probably mediates the interaction of TBK1 with IRF3. Associated with 40S pre-ribosomal particles. Requires Mg(2+) as cofactor. Post-translationally, autophosphorylated (in vitro).

It localises to the cytoplasm. The catalysed reaction is L-seryl-[protein] + ATP = O-phospho-L-seryl-[protein] + ADP + H(+). The enzyme catalyses L-threonyl-[protein] + ATP = O-phospho-L-threonyl-[protein] + ADP + H(+). Functionally, involved in regulation of type I interferon (IFN)-dependent immune response which plays a critical role in the innate immune response against DNA and RNA viruses. May act as an adapter protein essential for the recruitment of TBK1 to IRF3. Phosphorylates IFIH1 on 'Ser-828' interfering with IFIH1 filament assembly on long dsRNA and resulting in attenuated IFIH1-signaling. Can inhibit CASP10 isoform 7-mediated activation of the NF-kappaB signaling pathway. May play a role in the biogenesis of the 40S ribosomal subunit. Involved in the processing of 21S pre-rRNA to the mature 18S rRNA. In Mus musculus (Mouse), this protein is Serine/threonine-protein kinase RIO3 (Riok3).